The primary structure comprises 128 residues: Ribonuclease P protein component (128 aa).

It belongs to the RnpA family. Consists of a catalytic RNA component (M1 or rnpB) and a protein subunit.

The enzyme catalyses Endonucleolytic cleavage of RNA, removing 5'-extranucleotides from tRNA precursor.. Functionally, RNaseP catalyzes the removal of the 5'-leader sequence from pre-tRNA to produce the mature 5'-terminus. It can also cleave other RNA substrates such as 4.5S RNA. The protein component plays an auxiliary but essential role in vivo by binding to the 5'-leader sequence and broadening the substrate specificity of the ribozyme. The protein is Ribonuclease P protein component of Parasynechococcus marenigrum (strain WH8102).